The following is a 1015-amino-acid chain: SPOC domain-containing protein 1 (1015 aa).

4 disordered regions span residues 73 to 97, 118 to 159, 213 to 320, and 344 to 406; these read MVSPEDPTLSKEGLSAKGPPPSPVL, GFSL…EPGG, LYPE…PRLE, and AASS…MTPL. Positions 304 to 320 are enriched in basic and acidic residues; sequence SQDHAEGASKKDFPRLE. Positions 373 to 382 are enriched in polar residues; it reads AHPTPCQSDP. Residues 388-397 show a composition bias toward basic and acidic residues; that stretch reads AEPHQQRAED. In terms of domain architecture, TFIIS central spans 410-530; the sequence is VRSTVVRAMQ…IIEQQQKELY (121 aa). The disordered stretch occupies residues 643 to 685; it reads IQKAPGPAPASSPEVLKVGETPPKEPQDRLQMPAGLKNAPPSP. The SPOC domain occupies 688 to 791; that stretch reads WEGSLDMFSI…VQQVKMVLLP (104 aa). Disordered regions lie at residues 858–906 and 967–1015; these read PEDR…PGWG and QSQD…EHEC. Positions 967-978 are enriched in polar residues; it reads QSQDSLPPSTVV.

Interacts with DNMT3A, DNMT3C and DNMT3L. Interacts with C19orf84 homolog. Interacts with SPIN1; promoting recruitment to transposons marked with histone H3 trimethylated at both 'Lys-4' and 'Lys-9' (H3K4me3K9me3).

Its subcellular location is the nucleus. It is found in the chromosome. Its function is as follows. Protein adapter that acts as an essential executor of PIWIL4-piRNA pathway directed transposon DNA methylation and silencing in the male embryonic germ cells. Recruited to young transposons, which are specifically marked with histone H3 trimethylated at both 'Lys-4' and 'Lys-9' (H3K4me3K9me3), via its association with SPIN1 chromatin reader, and associates with the de novo DNA methylation machinery and repressive chromatin remodeling complexes. Following this, PIWIL4 engages with nascent transposable element transcript to direct piRNA-directed DNA methylation. Not required for piRNA biosynthesis. This Mus musculus (Mouse) protein is SPOC domain-containing protein 1.